The primary structure comprises 456 residues: Decaprenyl-diphosphate synthase (456 aa).

Isopentenyl diphosphate is bound by residues K183, R186, and H216. 2 residues coordinate Mg(2+): D223 and D227. R233 provides a ligand contact to isopentenyl diphosphate.

The protein belongs to the FPP/GGPP synthase family. Mg(2+) is required as a cofactor.

It is found in the mitochondrion. It catalyses the reaction 7 isopentenyl diphosphate + (2E,6E)-farnesyl diphosphate = all-trans-decaprenyl diphosphate + 7 diphosphate. It functions in the pathway cofactor biosynthesis; ubiquinone biosynthesis. Functionally, supplies decaprenyl diphosphate, the precursor for the side chain of the isoprenoid quinones ubiquinone-10. The sequence is that of Decaprenyl-diphosphate synthase (coq1) from Dictyostelium discoideum (Social amoeba).